The following is a 515-amino-acid chain: Maturase K (515 aa).

It belongs to the intron maturase 2 family. MatK subfamily.

Its subcellular location is the plastid. The protein resides in the chloroplast. In terms of biological role, usually encoded in the trnK tRNA gene intron. Probably assists in splicing its own and other chloroplast group II introns. The chain is Maturase K from Pinus leiophylla (Chihuahua pine).